The primary structure comprises 513 residues: GMP synthase [glutamine-hydrolyzing] (513 aa).

Residues 3–200 form the Glutamine amidotransferase type-1 domain; sequence SVLVLDFGSQ…LIDIAGITPD (198 aa). C80 acts as the Nucleophile in catalysis. Residues H174 and E176 contribute to the active site. Residues 201–388 enclose the GMPS ATP-PPase domain; the sequence is WSPKHFIDHQ…LGIAEDILMR (188 aa). 228–234 is a binding site for ATP; that stretch reads SGGVDSS.

As to quaternary structure, homodimer.

The catalysed reaction is XMP + L-glutamine + ATP + H2O = GMP + L-glutamate + AMP + diphosphate + 2 H(+). It participates in purine metabolism; GMP biosynthesis; GMP from XMP (L-Gln route): step 1/1. Its function is as follows. Catalyzes the synthesis of GMP from XMP. This is GMP synthase [glutamine-hydrolyzing] from Chlorobium limicola (strain DSM 245 / NBRC 103803 / 6330).